Reading from the N-terminus, the 60-residue chain is Large ribosomal subunit protein bL32 (60 aa).

Residues methionine 1–glutamate 60 form a disordered region. Polar residues predominate over residues asparagine 24–glutamate 35. Positions arginine 49 to glutamate 60 are enriched in basic residues.

It belongs to the bacterial ribosomal protein bL32 family.

This is Large ribosomal subunit protein bL32 from Bordetella petrii (strain ATCC BAA-461 / DSM 12804 / CCUG 43448).